Here is a 427-residue protein sequence, read N- to C-terminus: Serine hydroxymethyltransferase (427 aa).

(6S)-5,6,7,8-tetrahydrofolate is bound by residues Leu117 and 121–123 (GHL). Residue Lys226 is modified to N6-(pyridoxal phosphate)lysine.

Belongs to the SHMT family. Homodimer. Pyridoxal 5'-phosphate serves as cofactor.

Its subcellular location is the cytoplasm. The enzyme catalyses (6R)-5,10-methylene-5,6,7,8-tetrahydrofolate + glycine + H2O = (6S)-5,6,7,8-tetrahydrofolate + L-serine. It carries out the reaction L-threonine = acetaldehyde + glycine. It catalyses the reaction L-allo-threonine = acetaldehyde + glycine. The protein operates within one-carbon metabolism; tetrahydrofolate interconversion. It participates in amino-acid biosynthesis; glycine biosynthesis; glycine from L-serine: step 1/1. Its primary function is to catalyze the reversible interconversion of serine and glycine with tetrahydrofolate (THF) serving as the one-carbon carrier. This reaction serves as the major source of one-carbon groups required for the biosynthesis of purines, thymidylate, methionine, and other important biomolecules. Also exhibits THF-independent aldolase activity toward beta-hydroxyamino acids, producing glycine and aldehydes, via a retro-aldol mechanism. Thus, is able to catalyze the cleavage of L-threonine, L-allo-threonine, L-threo-beta-phenylserine and L-erythro-beta-phenylserine. This second activity is likely to be physiological in H.thermophilus, which is an organism that lacks the ortholog gene for the 'real' threonine aldolase characterized in mesophilic bacteria (LtaE), yeast and plants. This chain is Serine hydroxymethyltransferase, found in Hydrogenobacter thermophilus (strain DSM 6534 / IAM 12695 / TK-6).